Consider the following 201-residue polypeptide: Large ribosomal subunit protein uL4 (201 aa).

Positions 44–71 are disordered; the sequence is RAQKTRAEVTGSGKKPWRQKGTGRARSG.

Belongs to the universal ribosomal protein uL4 family. In terms of assembly, part of the 50S ribosomal subunit.

In terms of biological role, one of the primary rRNA binding proteins, this protein initially binds near the 5'-end of the 23S rRNA. It is important during the early stages of 50S assembly. It makes multiple contacts with different domains of the 23S rRNA in the assembled 50S subunit and ribosome. Its function is as follows. Forms part of the polypeptide exit tunnel. The polypeptide is Large ribosomal subunit protein uL4 (Edwardsiella ictaluri (strain 93-146)).